We begin with the raw amino-acid sequence, 135 residues long: U-scoloptoxin(22)-Er1a (135 aa).

Residues 1-24 form the signal peptide; sequence MAVILKHLAIILLVFVIEIKMGQG. Positions 61-135 are disordered; it reads PQITFSTDWG…RSPRYLPTII (75 aa). Positions 75–127 are enriched in basic and acidic residues; it reads SVNEDREAAERERSPQMKRSEHEEQLMAKDEMKRFQEERNPSSDDKIAIDKRS.

The protein belongs to the scoloptoxin-22 family. In terms of tissue distribution, expressed by the venom gland.

It localises to the secreted. This Ethmostigmus rubripes (Giant centipede) protein is U-scoloptoxin(22)-Er1a.